The following is a 378-amino-acid chain: E3 ubiquitin-protein ligase ATL9 (378 aa).

The N-terminal stretch at 1 to 33 (MAILDTKSSRWIPHNLLFLLLLLLLQSVPYGFG) is a signal peptide. The chain crosses the membrane as a helical span at residues 51–71 (VVVVITVLFLVIFFMVFGSIF). Residues 135–177 (CAVCLCEFEDDETLRLMPPCCHVFHADCVDVWLSEHSTCPLCR) form an RING-type; atypical zinc finger. Disordered stretches follow at residues 187 to 211 (DDDDSTESYSGTDPGTISSSTDPER), 300 to 326 (ARSSRSGYRSGSVGSERSAFPYGRKSN), and 350 to 378 (FSGDAPKNLPTSIEAGERSFERLRPDERV). Over residues 193–207 (ESYSGTDPGTISSST) the composition is skewed to polar residues. Residues 301–317 (RSSRSGYRSGSVGSERS) show a composition bias toward low complexity. A compositionally biased stretch (basic and acidic residues) spans 364 to 378 (AGERSFERLRPDERV).

It belongs to the RING-type zinc finger family. ATL subfamily.

Its subcellular location is the membrane. The enzyme catalyses S-ubiquitinyl-[E2 ubiquitin-conjugating enzyme]-L-cysteine + [acceptor protein]-L-lysine = [E2 ubiquitin-conjugating enzyme]-L-cysteine + N(6)-ubiquitinyl-[acceptor protein]-L-lysine.. Its pathway is protein modification; protein ubiquitination. E3 ubiquitin-protein ligase able to catalyze polyubiquitination with ubiquitin-conjugating enzyme E2 UBC8 in vitro. May be involved in the early steps of the plant defense signaling pathway. This chain is E3 ubiquitin-protein ligase ATL9 (ATL9), found in Arabidopsis thaliana (Mouse-ear cress).